A 438-amino-acid chain; its full sequence is MESQQLHQNPHSLHGSAYASVTSKEVSSNQDPLAVSASNLPEFDRDSTKVNSQQETTPGTSAVPENHHHVSPQPASVPPPQNGQYQQHGMMTPNKAMASNWAHYQQPSMMTCSHYQTSPAYYQPDPHYPLPQYIPPLSTSSPDPIDSQDQHSEVPQAKTKVRNNVLPPHTLTSEENFYTWVKFYIRFLKNSNLGDIIPNDQGEIKRQMTYEEHAYIYNTFQAFAPFHLLPTWVKQILEINYADILTVLCKSVSKMQTNNQELKDWIALANLEYDGSTSADTFEITVSTIIQRLKENNINVSDRLACQLILKGLSGDFKYLRNQYRTKTNMKLSQLFAEIQLIYDENKIMNLNKPSQYKQHSEYKNVSRTSPNTTNTKVTTRNYHRTNSSKPRAAKAHNIATSSKFSRVNNDHINESTVSSQYLSDDNELSLRPATERI.

Polar residues-rich tracts occupy residues methionine 1–histidine 11, alanine 19–asparagine 39, and lysine 49–threonine 60. Disordered stretches follow at residues methionine 1 to histidine 88, lysine 364 to histidine 397, and serine 419 to isoleucine 438. The segment at glutamate 295–histidine 397 is RNA-binding. Low complexity predominate over residues threonine 369–arginine 381.

Homotrimer.

It is found in the cytoplasm. In terms of biological role, capsid protein (CA) is the structural component of the virus-like particle (VLP), forming the shell that encapsulates the retrotransposons dimeric RNA genome. The particles are assembled from trimer-clustered units and there are holes in the capsid shells that allow for the diffusion of macromolecules. CA also has nucleocapsid-like chaperone activity, promoting primer tRNA(i)-Met annealing to the multipartite primer-binding site (PBS), dimerization of Ty2 RNA and initiation of reverse transcription. The sequence is that of Transposon Ty2-B Gag polyprotein (TY2A-B) from Saccharomyces cerevisiae (strain ATCC 204508 / S288c) (Baker's yeast).